Here is a 348-residue protein sequence, read N- to C-terminus: A-kinase anchor protein 7 isoform gamma (348 aa).

Residues 1–25 form a disordered region; sequence MERPEAGGINSNECENVSRKKKMSE. AMP-binding positions include threonine 129 and 219-221; that span reads HLT. CMP contacts are provided by residues threonine 129 and 219 to 221; that span reads HLT. The tract at residues 294 to 348 is PKA-RII-alpha subunit binding domain; sequence AELVRLSKRLVENAVLKAVQQYLEETQNKNKPGEGSSVKTEAADQNGNDNENNRK. Residues 295–319 are RI-alpha-binding; the sequence is ELVRLSKRLVENAVLKAVQQYLEET. The RII-binding stretch occupies residues 296–309; it reads LVRLSKRLVENAVL. The segment at 316-348 is disordered; that stretch reads LEETQNKNKPGEGSSVKTEAADQNGNDNENNRK. The segment covering 330–348 has biased composition (polar residues); that stretch reads SVKTEAADQNGNDNENNRK.

In terms of assembly, binds cAMP-dependent protein kinase (PKA). Interacts with PRKCA; only the cytoplasmic form is capable of interacting with PRKCA. As to expression, expressed in brain, heart, lung, pancreas and placenta.

The protein localises to the nucleus. The protein resides in the cytoplasm. Probably targets cAMP-dependent protein kinase (PKA) to the cellular membrane or cytoskeletal structures. The membrane-associated form reduces epithelial sodium channel (ENaC) activity, whereas the free cytoplasmic form may negatively regulate ENaC channel feedback inhibition by intracellular sodium. The chain is A-kinase anchor protein 7 isoform gamma (AKAP7) from Homo sapiens (Human).